Here is a 655-residue protein sequence, read N- to C-terminus: RalA-binding protein 1-A (655 aa).

The tract at residues 1 to 153 (MTECFLPPAS…KKSKDLTAAD (153 aa)) is disordered. Positions 52-68 (DILHEPPDIVSEDEKDH) are enriched in basic and acidic residues. 69 to 74 (GKKKGK) serves as a coordination point for ATP. Basic residues-rich tracts occupy residues 69–79 (GKKKGKFKKKE) and 102–118 (KIKR…PSFS). Residues 102 to 119 (KIKRSKGIHVFKKPSFSK) form a nuclear localization signal region. Residues 119–150 (KKKEKDFKIKEKPKEEKHKEDKHKEKKSKDLT) are compositionally biased toward basic and acidic residues. A run of 2 repeats spans residues 133-137 (EEKHK) and 138-142 (EDKHK). Positions 133–142 (EEKHKEDKHK) are 2 X 5 AA tandem repeats of E-[D/E]-K-H-K. A mediates association with membranes and could form transmembrane domains region spans residues 149–214 (LTAADVVKQW…PLVFRECIDF (66 aa)). The Rho-GAP domain maps to 187–383 (IPLIEAAERT…PLRWSNMATM (197 aa)). Residues 398–495 (RRQEFLLNCL…LTEQEELVAM (98 aa)) form a mediates interaction with RALA and RALB region. ATP is bound at residue 413–420 (AGVKDLSK). Positions 494–510 (AMEQYLRRQIATEKEEI) are required to maintain nuclear localization. Residues 496-655 (EQYLRRQIAT…GKKLSSETLI (160 aa)) are mediates interaction with REPS1 and REPS2. 2 disordered regions span residues 520-548 (IQSR…EEEL) and 600-655 (LQEE…ETLI). The span at 532–548 (EEYSSESESESEDEEEL) shows a compositional bias: acidic residues. A compositionally biased stretch (basic and acidic residues) spans 619 to 630 (NLPETKAPKDQP).

Interacts with the active, GTP-bound form of ralB and ralA.

The protein localises to the cell membrane. It is found in the cytoplasm. It localises to the cytosol. The protein resides in the cytoskeleton. Its subcellular location is the spindle pole. The protein localises to the nucleus. It is found in the mitochondrion. It localises to the cell projection. The protein resides in the lamellipodium. It carries out the reaction an S-substituted glutathione(in) + ATP + H2O = an S-substituted glutathione(out) + ADP + phosphate + H(+). The catalysed reaction is ATP + H2O + xenobioticSide 1 = ADP + phosphate + xenobioticSide 2.. The enzyme catalyses leukotriene C4(in) + ATP + H2O = leukotriene C4(out) + ADP + phosphate + H(+). Its function is as follows. Multifunctional protein that functions as a downstream effector of ralA and ralB. As a GTPase-activating protein/GAP can inactivate CDC42 and RAC1 by stimulating their GTPase activity. As part of the Ral signaling pathway, may also regulate ligand-dependent EGF and insulin receptors-mediated endocytosis. During mitosis, may act as a scaffold protein in the phosphorylation of EPSIN/EPN1 by the mitotic kinase cyclin B-CDK1, preventing endocytosis during that phase of the cell cycle. During mitosis, also controls mitochondrial fission as an effector of ralA. Recruited to mitochondrion by ralA, acts as a scaffold to foster the mitotic kinase cyclin B-CDK1-mediated phosphorylation and activation of DNM1L. Acts on the cytoskeleton, to regulate pigment distribution and to regulate gastrulation. Could also function as a primary ATP-dependent active transporter for glutathione conjugates of electrophiles. May also actively catalyze the efflux of a wide range of substrates including xenobiotics like doxorubicin (DOX) contributing to cell multidrug resistance. The chain is RalA-binding protein 1-A (ralbp1-a) from Xenopus laevis (African clawed frog).